Consider the following 51-residue polypeptide: MARYRCCRSQSRSRYYRQRQRSRRRRRRSCQTRRRAMRCCRPRYRPRCRRH.

Residues 1-13 (MARYRCCRSQSRS) are compositionally biased toward low complexity. Residues 1 to 30 (MARYRCCRSQSRSRYYRQRQRSRRRRRRSC) are disordered. The span at 14 to 30 (RYYRQRQRSRRRRRRSC) shows a compositional bias: basic residues. An intrachain disulfide couples Cys40 to Cys48.

Belongs to the protamine P1 family. In terms of assembly, cross-linked by interchain disulfide bonds around the DNA-helix. Phosphorylated by SRPK1. Testis.

It is found in the nucleus. The protein localises to the chromosome. Its function is as follows. Protamines substitute for histones in the chromatin of sperm during the haploid phase of spermatogenesis. They compact sperm DNA into a highly condensed, stable and inactive complex. The sequence is that of Sperm protamine P1 (PRM1) from Homo sapiens (Human).